Consider the following 622-residue polypeptide: Chaperone protein HscA homolog (622 aa).

It belongs to the heat shock protein 70 family.

Its function is as follows. Chaperone involved in the maturation of iron-sulfur cluster-containing proteins. Has a low intrinsic ATPase activity which is markedly stimulated by HscB. This is Chaperone protein HscA homolog from Burkholderia lata (strain ATCC 17760 / DSM 23089 / LMG 22485 / NCIMB 9086 / R18194 / 383).